The primary structure comprises 182 residues: Endoribonuclease YbeY (182 aa).

Residues His120, His124, and His130 each coordinate Zn(2+). A disordered region spans residues 157 to 182 (RGVSFAPKPTGAGAFPSAADRDDTQN).

The protein belongs to the endoribonuclease YbeY family. Zn(2+) is required as a cofactor.

It localises to the cytoplasm. Single strand-specific metallo-endoribonuclease involved in late-stage 70S ribosome quality control and in maturation of the 3' terminus of the 16S rRNA. The sequence is that of Endoribonuclease YbeY from Corynebacterium jeikeium (strain K411).